The chain runs to 861 residues: Methyltransferase/ribosomally synthesized type III borosin cyclic peptide precursor aboMAa (861 aa).

The methyltransferase domain stretch occupies residues 1–279; that stretch reads MSSPAVETKV…AISTFYLPPK (279 aa). Catalysis depends on residues Arg100, Tyr104, and Tyr126. S-adenosyl-L-methionine is bound by residues Tyr126, His128, Val131, Ala158, Gln200, Ala241, Ser272, and Thr273. The interval 280-408 is clasp domain; that stretch reads ALSPLHEESA…GLVRSVMKTS (129 aa). The segment at 409–799 is type III-specific C-terminal domain; sequence PEDVAKQFVQ…PPDLEELPIP (391 aa). 2 disordered regions span residues 575–596 and 772–801; these read NGAF…SSQG and EAAE…IPDA. Gly residues predominate over residues 579–593; sequence PSGGGGGSGGGGGSS. Residues 772 to 783 show a composition bias toward basic and acidic residues; that stretch reads EAAEKDSAVDDE. Over residues 784 to 797 the composition is skewed to acidic residues; the sequence is KFADEEPPDLEELP. N-methylvaline occurs at positions 805 and 807. 9 tandem repeats follow at residues 805–809, 810–814, 815–819, 820–824, 825–829, 830–834, 835–839, 840–844, and 845–849. Positions 805-854 are 10 X 5 AA tandem repeats of VDVTD; the sequence is VDVTDVDVTDVDVTDVDVTDVDVTDVDVTDVDVTDVDVTDVDVTDVDVVD. Thr808 is subject to N-methylthreonine. 2 positions are modified to N-methylvaline: Val810 and Val812. An N-methylthreonine modification is found at Thr813. Residues Val815 and Val817 each carry the N-methylvaline modification. Residue Thr818 is modified to N-methylthreonine. Val820 and Val822 each carry N-methylvaline. Residue Thr823 is modified to N-methylthreonine. 2 positions are modified to N-methylvaline: Val825 and Val827. An N-methylthreonine modification is found at Thr828. N-methylvaline is present on residues Val830 and Val832. Thr833 carries the post-translational modification N-methylthreonine. One copy of the 10; approximate repeat lies at 850-854; sequence VDVVD.

In the N-terminal section; belongs to the precorrin methyltransferase family. AboMA automethylates at Val-805, Val-807, Thr-808, Val-810, Val-812, Thr-813, Val-815, Val-817, Thr-818, Val-820, Val-822, Thr-823, Val-825, Val-827 and Thr-828, Val-830, Val-832 and T-833 before being processed by a prolyloligopeptidase which likely forms a peptidyl ester upon removal of the follower propeptide, which then undergoes macrocyclization with the N-terminus of the modified core peptide. Peptide backbone alpha-N-methylations change the physicochemical properties of amide bonds to provide structural constraints and other favorable characteristics including biological membrane permeability to peptides.

It functions in the pathway secondary metabolite biosynthesis. Its function is as follows. Fusion protein of the methyltransferase aboM and a type III borosin core peptide; part of the gene cluster that mediates the biosynthesis of a type III borosin, a highly methylated cyclic peptide with potent biological activities. Type III borosins derive from the C-terminus of the fusion protein, and it is the same protein that methylates its own C-terminus using S-adenosyl methionine (SAM). The C-terminus is subsequently cleaved off and macrocyclized by a prolyloligopeptidase to give the final product. The chain is Methyltransferase/ribosomally synthesized type III borosin cyclic peptide precursor aboMAa from Anomoporia bombycina (Polyporus bombycinus).